We begin with the raw amino-acid sequence, 61 residues long: Temporin-ALj (61 aa).

The first 22 residues, 1–22 (MFTLKKSLLLLFFLATINLSFC), serve as a signal peptide directing secretion. The propeptide occupies 23–46 (EQERNAEEERRDEPDERNAEVEKR). Leu59 bears the Leucine amide mark.

Belongs to the frog skin active peptide (FSAP) family. Temporin subfamily. Expressed by the skin glands.

The protein localises to the secreted. Its function is as follows. Antimicrobial peptide with activity against Gram-positive and Gram-negative bacteria and against fungi. Has been tested against S.aureus (MIC=7.5 ug/mL), B.pumilus (MIC=15.0 ug/mL), B.cereus (MIC=75.0 ug/mL), E.coli (MIC=15.0 ug/mL), B.dysenteriae (MIC=30.0 ug/mL), A.cacoaceticus (MIC=60.0 ug/mL), P.aeruginosa (MIC=7.5 ug/mL) and C.albicans (MIC=5.0 ug/mL). Also shows a weak hemolytic activity. This is Temporin-ALj from Amolops loloensis (Lolokou Sucker Frog).